We begin with the raw amino-acid sequence, 360 residues long: U7 snRNA-associated Sm-like protein LSm11 (360 aa).

Residues 1–29 (MEERERGARSAGAGSPARPPSPRLDVSSD) form a disordered region. Phosphoserine is present on residues Ser15 and Ser21. Position 41 is an omega-N-methylarginine (Arg41). The disordered stretch occupies residues 68–143 (RGGGRGRGRA…PGRSRKAPRN (76 aa)). Residues 78–94 (RGAAAGSGVPAAPGPSG) are compositionally biased toward low complexity. Lys120 is covalently cross-linked (Glycyl lysine isopeptide (Lys-Gly) (interchain with G-Cter in SUMO2)). Ser154 carries the post-translational modification Phosphoserine. Positions 154–229 (SPLGELHRCI…LTLTRLFDRL (76 aa)) constitute a Sm domain. An SM 1 region spans residues 171–204 (VHIRTFKGLRGVCTGFLVAFDKFWNMALTDVDET). Residues 268–333 (ADTGRGSHKR…SRKKKRKPKV (66 aa)) are disordered. A Phosphoserine modification is found at Ser280. Residues 299 to 322 (GRTTRTDGSSVGGTFSRATTLSRG) are compositionally biased toward polar residues. Residues 343–356 (INQIFIRGENVLLV) are SM 2.

The protein belongs to the snRNP Sm proteins family. As to quaternary structure, component of the heptameric ring U7 snRNP complex, or U7 Sm protein core complex, at least composed of LSM10, LSM11, SNRPB, SNRPD3, SNRPE, SNRPF, SNRPG and U7 snRNA. Formation of the U7 snRNP is an ATP-dependent process mediated by a specialized SMN complex containing at least the Sm protein core complex and additionally, the U7-specific LSM10 and LSM11 proteins. Identified in a histone pre-mRNA complex, at least composed of ERI1, LSM11, SLBP, SNRPB, SYNCRIP and YBX1. Interacts (via the Sm domains) with CLNS1A. Interacts with SMN and ZNF473. Interacts with PRMT5 and WDR77.

The protein resides in the nucleus. Its function is as follows. Component of the U7 snRNP complex that is involved in the histone 3'-end pre-mRNA processing. Increases U7 snRNA levels but not histone 3'-end pre-mRNA processing activity, when overexpressed. Required for cell cycle progression from G1 to S phases. Binds specifically to the Sm-binding site of U7 snRNA. The sequence is that of U7 snRNA-associated Sm-like protein LSm11 from Homo sapiens (Human).